The following is a 148-amino-acid chain: Aspartate carbamoyltransferase regulatory chain (148 aa).

The Zn(2+) site is built by cysteine 106, cysteine 111, cysteine 134, and cysteine 137.

It belongs to the PyrI family. In terms of assembly, contains catalytic and regulatory chains. The cofactor is Zn(2+).

Its function is as follows. Involved in allosteric regulation of aspartate carbamoyltransferase. This chain is Aspartate carbamoyltransferase regulatory chain, found in Methanococcus maripaludis (strain C5 / ATCC BAA-1333).